Here is a 189-residue protein sequence, read N- to C-terminus: Putative 3-methyladenine DNA glycosylase (189 aa).

The protein belongs to the DNA glycosylase MPG family.

The protein is Putative 3-methyladenine DNA glycosylase (mag) of Corynebacterium glutamicum (strain ATCC 13032 / DSM 20300 / JCM 1318 / BCRC 11384 / CCUG 27702 / LMG 3730 / NBRC 12168 / NCIMB 10025 / NRRL B-2784 / 534).